The following is a 513-amino-acid chain: Mannan endo-1,4-beta-mannosidase A and B (513 aa).

The first 26 residues, 1-26 (MKVYKKVAFVMAFIMFFSVLPTISMS), serve as a signal peptide directing secretion. In terms of domain architecture, GH26 spans 41 to 353 (QTTKNVYSWL…FNDSWVVNRG (313 aa)). Histidine 132 lines the substrate pocket. The active-site Proton donor is glutamate 195. Tryptophan 200 and tyrosine 270 together coordinate substrate. Glutamate 295 (nucleophile) is an active-site residue. A substrate-binding site is contributed by 429-430 (IK).

The protein belongs to the glycosyl hydrolase 26 family.

The protein localises to the secreted. It catalyses the reaction Random hydrolysis of (1-&gt;4)-beta-D-mannosidic linkages in mannans, galactomannans and glucomannans.. Could be involved in the degradation of glucomannan and catalyzes the endo hydrolysis of beta-1,4-linked mannan, galactomannan and glucomannan. This Caldalkalibacillus mannanilyticus (strain DSM 16130 / CIP 109019 / JCM 10596 / AM-001) (Bacillus mannanilyticus) protein is Mannan endo-1,4-beta-mannosidase A and B.